A 259-amino-acid polypeptide reads, in one-letter code: 2-oxoglutaramate amidase (259 aa).

The CN hydrolase domain occupies 3–238 (WTISCLQFDI…EGIVRAEIDL (236 aa)). Glu42 functions as the Proton acceptor in the catalytic mechanism. The active-site Proton donor is Lys111. The active-site Nucleophile is the Cys145.

Belongs to the carbon-nitrogen hydrolase superfamily. NIT1/NIT2 family.

The catalysed reaction is 2-oxoglutaramate + H2O = 2-oxoglutarate + NH4(+). Involved in the methylthioribose (MTR) recycling pathway. Probably catalyzes the conversion of 2-oxoglutaramate to 2-oxoglutarate. This Bacillus subtilis (strain 168) protein is 2-oxoglutaramate amidase.